The primary structure comprises 139 residues: Ribonuclease VapC3 (139 aa).

Positions Glu-14–Arg-121 constitute a PINc domain. Asp-19 lines the Mg(2+) pocket.

It belongs to the PINc/VapC protein family. It depends on Mg(2+) as a cofactor.

In terms of biological role, toxic component of a type II toxin-antitoxin (TA) system. An RNase. This is Ribonuclease VapC3 from Aeropyrum pernix (strain ATCC 700893 / DSM 11879 / JCM 9820 / NBRC 100138 / K1).